The chain runs to 243 residues: Interleukin-27 subunit alpha (243 aa).

Residues 1-28 (MGQTAGDLGWRLSLLLLPLLLVQAGVWG) form the signal peptide.

The protein belongs to the IL-6 superfamily. As to quaternary structure, heterodimer with EBI3; not disulfide-linked. This heterodimer is known as interleukin IL-27. O-glycosylated. As to expression, expressed in monocytes and in placenta.

The protein resides in the secreted. Its function is as follows. Associates with EBI3 to form the IL-27 interleukin, a heterodimeric cytokine which functions in innate immunity. IL-27 has pro- and anti-inflammatory properties, that can regulate T-helper cell development, suppress T-cell proliferation, stimulate cytotoxic T-cell activity, induce isotype switching in B-cells, and that has diverse effects on innate immune cells. Among its target cells are CD4 T-helper cells which can differentiate in type 1 effector cells (TH1), type 2 effector cells (TH2) and IL17 producing helper T-cells (TH17). It drives rapid clonal expansion of naive but not memory CD4 T-cells. It also strongly synergizes with IL-12 to trigger interferon-gamma/IFN-gamma production of naive CD4 T-cells, binds to the cytokine receptor WSX-1/TCCR which appears to be required but not sufficient for IL-27-mediated signal transduction. IL-27 potentiate the early phase of TH1 response and suppress TH2 and TH17 differentiation. It induces the differentiation of TH1 cells via two distinct pathways, p38 MAPK/TBX21- and ICAM1/ITGAL/ERK-dependent pathways. It also induces STAT1, STAT3, STAT4 and STAT5 phosphorylation and activates TBX21/T-Bet via STAT1 with resulting IL12RB2 up-regulation, an event crucial to TH1 cell commitment. It suppresses the expression of GATA3, the inhibitor TH1 cells development. In CD8 T-cells, it activates STATs as well as GZMB. IL-27 reveals to be a potent inhibitor of TH17 cell development and of IL-17 production. Indeed IL27 alone is also able to inhibit the production of IL17 by CD4 and CD8 T-cells. While IL-27 suppressed the development of pro-inflammatory Th17 cells via STAT1, it inhibits the development of anti-inflammatory inducible regulatory T-cells, iTreg, independently of STAT1. IL-27 also has an effect on cytokine production, it suppresses pro-inflammatory cytokine production such as IL2, IL4, IL5 and IL6 and activates suppressors of cytokine signaling such as SOCS1 and SOCS3. Apart from suppression of cytokine production, IL-27 also antagonizes the effects of some cytokines such as IL6 through direct effects on T-cells. Another important role of IL-27 is its antitumor activity as well as its antiangiogenic activity with activation of production of antiangiogenic chemokines such as IP-10/CXCL10 and MIG/CXCL9. In vein endothelial cells, it induces IRF1/interferon regulatory factor 1 and increase the expression of MHC class II transactivator/CIITA with resulting up-regulation of major histocompatibility complex class II. IL-27 also demonstrates antiviral activity with inhibitory properties on HIV-1 replication. The protein is Interleukin-27 subunit alpha (IL27) of Homo sapiens (Human).